The sequence spans 229 residues: Bcl-2-like protein 1 (229 aa).

The short motif at 4 to 24 (SNRELVIDFVSYKLSQRGHCW) is the BH4 element. Positions 82–96 (VRQALRDAGDEFELR) match the BH3 motif. The BH1 motif lies at 125-144 (ELFHDGVNWGRIVAFFSFGG). Residues 176-191 (PWIQENGGWERFVDLY) carry the BH2 motif. A helical membrane pass occupies residues 206 to 223 (FNKWLLTGATVAGVLLLG).

It belongs to the Bcl-2 family. Highest expression in organs with lymphoid development.

The protein resides in the mitochondrion membrane. It localises to the nucleus membrane. It is found in the mitochondrion matrix. The protein localises to the cytoplasm. Its subcellular location is the cytoskeleton. The protein resides in the microtubule organizing center. It localises to the centrosome. It is found in the cytosol. The protein localises to the cytoplasmic vesicle. Its subcellular location is the secretory vesicle. The protein resides in the synaptic vesicle membrane. Dominant regulator of apoptotic cell death. The long form displays cell death repressor activity, whereas the short isoform promotes apoptosis. Also acts as a regulator of G2 checkpoint and progression to cytokinesis during mitosis. The polypeptide is Bcl-2-like protein 1 (BCL2L1) (Gallus gallus (Chicken)).